Reading from the N-terminus, the 250-residue chain is MSISFSNFDFINSTIQNYLNRKLKSYGDLKYAYLIMNKKKPTDVVIISNYPSEWVEIYRSNNYQHIDPVILTAINKISPFSWDDDLVISSKLKFSRIFNLSKEYDIVNGYTFVLHDPGNNLATLSFMFEENRSGELEEIVQNNKEKLQMLLISAHEKLTSLYREMSKNKNNSKSQEPNIFSQRENEILYWASMGKTYQEIALILGITTSTVKFHIGNVVKKLGVLNAKHAIRLGVEMNLIKPVEPVKARS.

The 66-residue stretch at 173-238 (KSQEPNIFSQ…HAIRLGVEMN (66 aa)) folds into the HTH luxR-type domain. Positions 197 to 216 (YQEIALILGITTSTVKFHIG) form a DNA-binding region, H-T-H motif.

It belongs to the autoinducer-regulated transcriptional regulatory protein family.

Its function is as follows. Functions as a potential ohlL-responsive transcriptional regulator. This Dickeya chrysanthemi (Pectobacterium chrysanthemi) protein is Transcriptional activator protein EchR (echR).